The sequence spans 309 residues: S-methyl-5'-thioadenosine phosphorylase (309 aa).

Phosphate contacts are provided by residues threonine 19, 64–65 (RH), and 97–98 (SA). Position 201 (methionine 201) interacts with substrate. Residue serine 202 participates in phosphate binding. 225–227 (DYD) provides a ligand contact to substrate.

The protein belongs to the PNP/MTAP phosphorylase family. MTAP subfamily. As to quaternary structure, homotrimer.

The protein localises to the cytoplasm. Its subcellular location is the nucleus. The enzyme catalyses S-methyl-5'-thioadenosine + phosphate = 5-(methylsulfanyl)-alpha-D-ribose 1-phosphate + adenine. Its pathway is amino-acid biosynthesis; L-methionine biosynthesis via salvage pathway; S-methyl-5-thio-alpha-D-ribose 1-phosphate from S-methyl-5'-thioadenosine (phosphorylase route): step 1/1. Its function is as follows. Catalyzes the reversible phosphorylation of S-methyl-5'-thioadenosine (MTA) to adenine and 5-methylthioribose-1-phosphate. Involved in the breakdown of MTA, a major by-product of polyamine biosynthesis. Responsible for the first step in the methionine salvage pathway after MTA has been generated from S-adenosylmethionine. Has broad substrate specificity with 6-aminopurine nucleosides as preferred substrates. The sequence is that of S-methyl-5'-thioadenosine phosphorylase from Tuber melanosporum (strain Mel28) (Perigord black truffle).